A 651-amino-acid chain; its full sequence is Protein SCARECROW 1 (651 aa).

Disordered regions lie at residues 1–33 (MGSSSLLLFPSSSSSATHSSYSPSSSSHAITSL) and 188–277 (SDPA…KQRD). Pro residues predominate over residues 190–228 (PAPPPPPPPSHPALLPPDATAPPPPPTSVAALPPPPPPQ). Positions 253 to 280 (TAEETAAAAAAAKERKEEQRRKQRDEEG) form a coiled coil. Residues 254 to 263 (AEETAAAAAA) show a composition bias toward low complexity. Residues 264–277 (AKERKEEQRRKQRD) are compositionally biased toward basic and acidic residues. The GRAS domain occupies 274 to 644 (KQRDEEGLHL…LCLLTASAWR (371 aa)). Residues 281 to 345 (LHLLTLLLQC…VSSCLGLYAP (65 aa)) form a leucine repeat I (LRI) region. The LxCxE motif signature appears at 288–292 (LQCAE). A VHIID region spans residues 364-429 (FQVFNGISPF…GGPPRVRLTG (66 aa)). Positions 395–399 (VHIID) match the VHIID motif. Residues 439–471 (ATGKRLSDFADTLGLPFEFCPVADKAGNLDPEK) are leucine repeat II (LRII). The interval 480-567 (VAVHWLRHSL…QQLLSREIRN (88 aa)) is PFYRE. The tract at residues 570-644 (AVGGPARTGD…LCLLTASAWR (75 aa)) is SAW.

This sequence belongs to the GRAS family. As to quaternary structure, interacts with SHR1, but not with SHR2. In terms of tissue distribution, expressed in the initial daughter cell before its asymmetric division and remains expressed in the endodermal cell layer after the division.

The protein resides in the nucleus. In terms of biological role, transcription factor required for quiescent center cells specification and maintenance of surrounding stem cells, and for the asymmetric cell division involved in radial pattern formation in roots. Essential for cell division but not differentiation of the ground tissue. Regulates the radial organization of the shoot axial organs. Restricts SHR movment and sequesters it into the nucleus of the endodermis. This chain is Protein SCARECROW 1 (SCR1), found in Oryza sativa subsp. japonica (Rice).